We begin with the raw amino-acid sequence, 276 residues long: Merozoite surface protein 2 (276 aa).

The first 20 residues, Met-1–Ile-20, serve as a signal peptide directing secretion. Residues Asn-22 and Asn-36 are each glycosylated (N-linked (GlcNAc...) asparagine). The interval Ala-44 to Ser-202 is polymorphic region. Residues Ala-44–Gly-242 form a disordered region. Positions Gly-51–Ala-90 are enriched in gly residues. Tandem repeats lie at residues Gly-53 to Ala-58, Gly-59 to Ala-64, Gly-65 to Ala-70, Gly-71 to Ala-76, and Gly-77 to Ala-82. The interval Gly-53 to Ala-82 is 5 X 6 AA tandem repeats of G-G-S-G-S-A. Low complexity predominate over residues Asn-91–Asn-127. Composition is skewed to polar residues over residues Lys-143 to Pro-169, Lys-176 to Asn-187, and Gln-194 to Pro-204. An N-linked (GlcNAc...) asparagine glycan is attached at Asn-153. An N-linked (GlcNAc...) asparagine glycan is attached at Asn-225. Positions Ser-229–Lys-238 are enriched in basic and acidic residues. A disulfide bridge links Cys-233 with Cys-241. Residue Asn-250 is glycosylated (N-linked (GlcNAc...) asparagine). Asn-250 is lipidated: GPI-anchor amidated asparagine. A propeptide spans Ser-251–Ile-276 (removed in mature form).

Its subcellular location is the cell membrane. May play a role in the merozoite attachment to the erythrocyte. In Plasmodium falciparum (isolate 7G8), this protein is Merozoite surface protein 2.